A 384-amino-acid chain; its full sequence is S-adenosylmethionine synthase (384 aa).

An ATP-binding site is contributed by His-15. A Mg(2+)-binding site is contributed by Asp-17. Residue Glu-43 participates in K(+) binding. Residues Glu-56 and Gln-99 each contribute to the L-methionine site. The flexible loop stretch occupies residues 99 to 109 (QSADINQGVDR). ATP contacts are provided by residues 164–166 (DAK), 230–231 (RF), Asp-239, 245–246 (RK), Ala-262, and Lys-266. Asp-239 contacts L-methionine. An L-methionine-binding site is contributed by Lys-270.

The protein belongs to the AdoMet synthase family. In terms of assembly, homotetramer; dimer of dimers. The cofactor is Mg(2+). K(+) serves as cofactor.

It localises to the cytoplasm. The catalysed reaction is L-methionine + ATP + H2O = S-adenosyl-L-methionine + phosphate + diphosphate. Its pathway is amino-acid biosynthesis; S-adenosyl-L-methionine biosynthesis; S-adenosyl-L-methionine from L-methionine: step 1/1. Catalyzes the formation of S-adenosylmethionine (AdoMet) from methionine and ATP. The overall synthetic reaction is composed of two sequential steps, AdoMet formation and the subsequent tripolyphosphate hydrolysis which occurs prior to release of AdoMet from the enzyme. The sequence is that of S-adenosylmethionine synthase from Haemophilus influenzae (strain 86-028NP).